Here is a 428-residue protein sequence, read N- to C-terminus: MAARRRRVNRVATISVHTSPLDQPGTGDAGGMNVYIVEVARRLADLGIEVEIFTRRTARDLPPAVELHPGVLVRHVTAGPYEELDRADLPGQLCSFLSGVLRTEAMYEPGRYDVIHSHYWLSGQVGWLAKERWGVPLVHTMHTMAKVKNLRLAEGDKPEPAIRVLGEEQVVDVADRLVANTVTEARELIELYHAPPERVTVVNPGVNLNIFRPAPKAAARRRLGLPADARVLLFVGRIQPLKAPDVMLRAAAIMIAERPELRSRLIVACVGGPSGNGLARPSLLADLAAELGIADVVRLEPPAPQPELADWYRAADLTVVPSHNESFGLVALESQACGTPVAAASVGGLRTAVRHGVSGVLVDGHDPRQWAASLAELLDDPDRLAALSAGAVRHAARFGWSATAARLAEVYTEALERVHRTVPVGANS.

Residue histidine 17 participates in 1D-myo-inositol 3-phosphate binding. Residues glutamine 23 to proline 24 and glycine 31 contribute to the UDP-N-acetyl-alpha-D-glucosamine site. 1D-myo-inositol 3-phosphate contacts are provided by residues aspartate 28 to asparagine 33, arginine 86, tyrosine 119, threonine 143, and arginine 163. Residues arginine 237 and lysine 242 each contribute to the UDP-N-acetyl-alpha-D-glucosamine site. 3 residues coordinate Mg(2+): tyrosine 312, arginine 313, and alanine 315. UDP-N-acetyl-alpha-D-glucosamine contacts are provided by glutamate 325 and glutamate 333. A Mg(2+)-binding site is contributed by threonine 339.

The protein belongs to the glycosyltransferase group 1 family. MshA subfamily. As to quaternary structure, homodimer.

The catalysed reaction is 1D-myo-inositol 3-phosphate + UDP-N-acetyl-alpha-D-glucosamine = 1D-myo-inositol 2-acetamido-2-deoxy-alpha-D-glucopyranoside 3-phosphate + UDP + H(+). Its function is as follows. Catalyzes the transfer of a N-acetyl-glucosamine moiety to 1D-myo-inositol 3-phosphate to produce 1D-myo-inositol 2-acetamido-2-deoxy-glucopyranoside 3-phosphate in the mycothiol biosynthesis pathway. This Thermobispora bispora (strain ATCC 19993 / DSM 43833 / CBS 139.67 / JCM 10125 / KCTC 9307 / NBRC 14880 / R51) protein is D-inositol 3-phosphate glycosyltransferase.